Here is a 431-residue protein sequence, read N- to C-terminus: Enolase (431 aa).

Gln-163 is a (2R)-2-phosphoglycerate binding site. Glu-205 acts as the Proton donor in catalysis. The Mg(2+) site is built by Asp-242, Glu-288, and Asp-315. 4 residues coordinate (2R)-2-phosphoglycerate: Lys-340, Arg-369, Ser-370, and Lys-391. Lys-340 acts as the Proton acceptor in catalysis.

The protein belongs to the enolase family. Mg(2+) serves as cofactor.

The protein localises to the cytoplasm. It is found in the secreted. It localises to the cell surface. The enzyme catalyses (2R)-2-phosphoglycerate = phosphoenolpyruvate + H2O. It functions in the pathway carbohydrate degradation; glycolysis; pyruvate from D-glyceraldehyde 3-phosphate: step 4/5. Its function is as follows. Catalyzes the reversible conversion of 2-phosphoglycerate (2-PG) into phosphoenolpyruvate (PEP). It is essential for the degradation of carbohydrates via glycolysis. This Bacillus cereus (strain ZK / E33L) protein is Enolase.